The chain runs to 319 residues: Probable enoyl-CoA hydratase alpha subunit (319 aa).

Positions 199-298 (FEAAKQRRLV…EIGMPVVLDW (100 aa)) are DUF35.

The protein belongs to the thioester dehydratase family. In terms of assembly, heterodimer composed of ChsH1 and ChsH2. Two heterodimers combine to form a heterotetramer. The complex interacts with Ltp2 via the DUF35 C-terminal region of ChsH2.

Its function is as follows. Probably involved in bile acid degradation. This chain is Probable enoyl-CoA hydratase alpha subunit, found in Thermomonospora curvata (strain ATCC 19995 / DSM 43183 / JCM 3096 / KCTC 9072 / NBRC 15933 / NCIMB 10081 / Henssen B9).